Consider the following 86-residue polypeptide: Small ribosomal subunit protein bS20 (86 aa).

Over residues 1–11 (MANIKQQKKRN) the composition is skewed to basic residues. Residues 1-21 (MANIKQQKKRNKTNEKRRLQN) are disordered.

Belongs to the bacterial ribosomal protein bS20 family.

Functionally, binds directly to 16S ribosomal RNA. This chain is Small ribosomal subunit protein bS20, found in Onion yellows phytoplasma (strain OY-M).